Here is a 935-residue protein sequence, read N- to C-terminus: Progesterone receptor (935 aa).

A disordered region spans residues 1–49; it reads MTELKAKGXRAPHVAGSPSSPKVXSPLPCRQAAXPFPGSQTSDTLPEVS. Residues 1 to 164 are AF3; mediates transcriptional activation; it reads MTELKAKGXR…SATQRVLSRL (164 aa). A modulating, Pro-Rich region spans residues 1 to 568; sequence MTELKAKGXR…YSFESLPQKI (568 aa). Low complexity predominate over residues 17-28; the sequence is SPSSPKVXSPLP. Ser20 is modified (phosphoserine). Residues 55 to 59 carry the LXXL motif 1 motif; it reads LDGLL. A disordered region spans residues 61-255; it reads PRICQGQDPP…GAAAGGGAAA (195 aa). Ser81 bears the Phosphoserine mark. The LXXL motif 2 motif lies at 115 to 119; sequence LDTLW. Phosphoserine is present on residues Ser130 and Ser162. Residues 165 to 305 form a mediates transcriptional transrepression region; it reads MSRSGGKAGD…LATTVTDFIH (141 aa). The short motif at 183 to 187 is the Nuclear localization signal element; it reads KVLPR. Phosphoserine is present on Ser190. Residues 191–203 are compositionally biased toward polar residues; sequence PSRQLLLPTTGSP. Position 213 is a phosphoserine (Ser213). Over residues 220–231 the composition is skewed to acidic residues; the sequence is EVEEEDGSESED. Positions 232–246 are enriched in low complexity; the sequence is SAGPLLKGKPRALGG. Ser294 bears the Phosphoserine; by MAPK1 mark. The segment at 331 to 365 is disordered; it reads GGAGAASAFAPPRSSPSASSTPVPGGDFPDCAYAP. Residues 335–356 are compositionally biased toward low complexity; it reads AASAFAPPRSSPSASSTPVPGG. The residue at position 345 (Ser345) is a Phosphoserine; by MAPK. A Glycyl lysine isopeptide (Lys-Gly) (interchain with G-Cter in SUMO); alternate cross-link involves residue Lys388. Residue Lys388 forms a Glycyl lysine isopeptide (Lys-Gly) (interchain with G-Cter in ubiquitin); alternate linkage. Ser400 bears the Phosphoserine; by CDK2 mark. The tract at residues 415–452 is disordered; sequence PDFPLGPPPPLPPRAPPSRPGEAAVTAAPASASVSSAS. The span at 418–433 shows a compositional bias: pro residues; it reads PLGPPPPLPPRAPPSR. Low complexity predominate over residues 434-452; that stretch reads PGEAAVTAAPASASVSSAS. The tract at residues 456–548 is AF1; mediates transcriptional activation; it reads STLECILYKA…VYPPYLNYLR (93 aa). Lys533 is covalently cross-linked (Glycyl lysine isopeptide (Lys-Gly) (interchain with G-Cter in SUMO)). NR C4-type zinc fingers lie at residues 569–589 and 605–629; these read CLIC…CGSC and CAGR…LRKC. The nuclear receptor DNA-binding region spans 569-641; it reads CLICGDEASG…AGMVLGGRKF (73 aa). Phosphoserine is present on Ser678. In terms of domain architecture, NR LBD spans 681-915; that stretch reads QDIQLIPPLI…EFPEMMSEVI (235 aa). Positions 689–935 are AF2; mediates transcriptional activation; it reads LINLLLSIEP…MVKPLLFHKK (247 aa).

It belongs to the nuclear hormone receptor family. In terms of assembly, interacts with SMARD1 and UNC45A. Interacts with CUEDC2; the interaction promotes ubiquitination, decreases sumoylation, and represses transcriptional activity. Interacts with PIAS3; the interaction promotes sumoylation of PR in a hormone-dependent manner, inhibits DNA-binding, and alters nuclear export. Interacts with SP1; the interaction requires ligand-induced phosphorylation on Ser-345 by ERK1/2-MAPK. Interacts with PRMT2. Interacts with NCOA2 and NCOA1. Interacts with KLF9. Interacts with GTF2B. Phosphorylated on multiple serine sites. Several of these sites are hormone-dependent. Phosphorylation on Ser-294 is highly hormone-dependent and modulates ubiquitination and sumoylation on Lys-388. Phosphorylation on Ser-345 also requires induction by hormone. Basal phosphorylation on Ser-81, Ser-162, Ser-190 and Ser-400 is increased in response to progesterone and can be phosphorylated in vitro by the CDK2-A1 complex. Increased levels of phosphorylation on Ser-400 also in the presence of EGF, heregulin, IGF, PMA and FBS. Phosphorylation at this site by CDK2 is ligand-independent, and increases nuclear translocation and transcriptional activity. Phosphorylation at Ser-162 and Ser-294, but not at Ser-190, is impaired during the G(2)/M phase of the cell cycle. Phosphorylation on Ser-345 by ERK1/2 MAPK is required for interaction with SP1. Post-translationally, sumoylation is hormone-dependent and represses transcriptional activity. Sumoylation on all three sites is enhanced by PIAS3. Desumoylated by SENP1. Sumoylation on Lys-388, the main site of sumoylation, is repressed by ubiquitination on the same site, and modulated by phosphorylation at Ser-294. In terms of processing, ubiquitination is hormone-dependent and represses sumoylation on the same site. Promoted by MAPK-mediated phosphorylation on Ser-294. Palmitoylated by ZDHHC7 and ZDHHC21. Palmitoylation is required for plasma membrane targeting and for rapid intracellular signaling via ERK and AKT kinases and cAMP generation.

It localises to the nucleus. It is found in the cytoplasm. The steroid hormones and their receptors are involved in the regulation of eukaryotic gene expression and affect cellular proliferation and differentiation in target tissues. Transcriptional activator of several progesteron-dependent promoters in a variety of cell types. Involved in activation of SRC-dependent MAPK signaling on hormone stimulation. This chain is Progesterone receptor (PGR), found in Ateles paniscus (Black spider monkey).